A 200-amino-acid polypeptide reads, in one-letter code: Snake venom serine protease VaSP1 (200 aa).

The Peptidase S1 domain maps to 1–200; that stretch reads VIGGDECNIN…EIQGIVSYGK (200 aa). Active-site charge relay system residues include aspartate 88 and serine 182.

Monomer. Post-translationally, N-glycosylated. The protein exist in multiple isoforms. In terms of tissue distribution, expressed by the venom gland.

It is found in the secreted. Its activity is regulated as follows. Inhibited by Pefabloc (90% inhibition), DTT (90%), Zn(2+) (80%), trypsin inhibitor II (50%), and benzamidine (45%), but not inhibited by EDTA, Ca(2+), Mg(2+) and L-Cys. In terms of biological role, snake venom serine protease active on several blood coagulation enzymes. It completely cleaves fibrinogen Aalpha chain (FGA) after 120 minutes, partially cleaves Bbeta chain (FGB) (overnight) and has no activity on gamma chain. It does not release fibrinopeptides A and/or B exclusively, since the enzyme does not provoke fibrin polymerisation. It also degrades fibrin as efficiently as plasmin, and exhibits potent ability to cleave plasminogen and prothrombin, as well as heavy chain of factor X (F10). In vitro, it cleaves insulin B-chain (at positions His38-Leu39, Ala40-Leu41 and Tyr16-Leu17). The chain is Snake venom serine protease VaSP1 from Vipera ammodytes ammodytes (Western sand viper).